Consider the following 587-residue polypeptide: Monocopper oxidase-like protein SKU5 (587 aa).

An N-terminal signal peptide occupies residues 1-20 (MDLFKILLLVFFVNISFCFA). 2 N-linked (GlcNAc...) asparagine glycosylation sites follow: Asn-14 and Asn-58. Residue His-80 coordinates Cu cation. 10 N-linked (GlcNAc...) asparagine glycosylation sites follow: Asn-107, Asn-169, Asn-200, Asn-257, Asn-278, Asn-293, Asn-342, Asn-362, Asn-430, and Asn-444. A Cu cation-binding site is contributed by His-452. A glycan (N-linked (GlcNAc...) asparagine) is linked at Asn-534. The GPI-anchor amidated serine moiety is linked to residue Ser-562. A propeptide spans 563–587 (ASKSIGFTSLSMVVMALVMMMMLQH) (removed in mature form).

This sequence belongs to the multicopper oxidase family. The cofactor is Cu cation. Expressed in roots, hypocotyls, cotyledons, leaves, stems and flowers.

It is found in the secreted. Its subcellular location is the cell wall. It localises to the cell membrane. In terms of biological role, may be a monocopper oxidase of unknown specificity. Involved in directional growth processes, possibly by participating in cell wall expansion. The chain is Monocopper oxidase-like protein SKU5 (SKU5) from Arabidopsis thaliana (Mouse-ear cress).